The following is a 1938-amino-acid chain: MSRWLWPWSNCVKERVCRYLLHHYLGHFFQEHLSLDQLSLDLYKGSVALRDIHLEIWSVNEVLESMESPLELVEGFVGSIEVAVPWAALLTDHCTVRVSGLQLTLQPRRGPAPGAADSQSWASCMTTSLQLAQECLRDGLPEPSEPPQPLEGLEMFAQTIETVLRRIKVTFLDTVVRVEHSPGDGERGVAVEVRVQRLEYCDEAVRDPSQAPPVDVHQPPAFLHKLLQLAGVRLHYEELPAQEEPPEPPLQIGSCSGYMELMVKLKQNEAFPGPKLEVAGQLGSLHLLLTPRQLQQLQELLSAVSLTDHEGLADKLNKSRPLGAEDLWLIEQDLNQQLQAGAVAEPLSPDPLTNPLLNLDNTDLFFSMAGLTSSVASALSELSLSDVDLASSVRSDMASRRLSAQAHPAGKMAPNPLLDTMRPDSLLKMTLGGVTLTLLQTSAPSSGPPDLATHFFTEFDATKDGPFGSRDFHHLRPRFQRACPCSHVRLTGTAVQLSWELRTGSRGRRTTSMEVHFGQLEVLECLWPRGTSEPEYTEILTFPGTLGSQASARPCAHLRHTQILRRVPKSRPRRSVACHCHSELALDLANFQADVELGALDRLAALLRLATVPAEPPAGLLTEPLPAMEQQTVFRLSAPRATLRLRFPIADLRPEPDPWAGQAVRAEQLRLELSEPQFRSELSSGPGPPVPTHLELTCSDLHGIYEDGGKPPVPCLRVSKALDPKSTGRKYFLPQVVVTVNPQSSSTQWEVAPEKGEELELSVESPCELREPEPSPFSSKRTMYETEEMVIPGDPEEMRTFQSRTLALSRCSLEVILPSVHIFLPSKEVYESIYNRINNDLLMWEPADLLPTPDPAAQPSGFPGPSGFWHDSFKMCKSAFKLANCFDLTPDSDSDDEDAHFFSVGASGGPQAAAPEAPSLHLQSTFSTLVTVLKGRITALCETKDEGGKRLEAVHGELVLDMEHGTLFSVSQYCGQPGLGYFCLEAEKATLYHRAAVDDYPLPSHLDLPSFAPPAQLAPTIYPSEEGVTERGASGRKGQGRGPHMLSTAVRIHLDPHKNVKEFLVTLRLHKATLRHYMALPEQSWHSQLLEFLDVLDDPVLGYLPPTVITILHTHLFSCSVDYRPLYLPVRVLITAETFTLSSNIIMDTSTFLLRFILDDSALYLSDKCEVETLDLRRDYVCVLDVDLLELVIKTWKGSTEGKLSQPLFELRCSNNVVHVHSCADSCALLVNLLQYVMSTGDLHPPPRPPSPTEIAGQKLSESPASLPSCPPVETALINQRDLADALLDTERSLRELAQPSGGHLPQASPISVYLFPGERSGAPPPSPPVGGPAGSLGSCSEEKEDEREEEGDGDTLDSDEFCILDAPGLGIPPRDGEPVVTQLHPGPIVVRDGYFSRPIGSTDLLRAPAHFPVPSTRVVLREVSLVWHLYGGRDFGPHPGHRARTGLSGPRSSPSRCSGPNRPQNSWRTQGGSGRQHHVLMEIQLSKVSFQHEVYPAEPATGPAAPSQELEERPLSRQVFIVQELEVRDRLASSQINKFLYLHTSERMPRRAHSNMLTIKALHVAPTTNLGGPECCLRVSLMPLRLNVDQDALFFLKDFFTSLVAGINPVVPGETSAEARPETRAQPSSPLEGQAEGVETTGSQEAPGGGHSPSPPDQQPIYFREFRFTSEVPIWLDYHGKHVTMDQVGTFAGLLIGLAQLNCSELKLKRLCCRHGLLGVDKVLGYALNEWLQDIRKNQLPGLLGGVGPMHSVVQLFQGFRDLLWLPIEQYRKDGRLMRGLQRGAASFGSSTASAALELSNRLVQAIQATAETVYDILSPAAPVSRSLQDKRSARRLRRGQQPADLREGVAKAYDTVREGILDTAQTICDVASRGHEQKGLTGAVGGVIRQLPPTVVKPLILATEATSSLLGGMRNQIVPDAHKDHALKWRSDSAQD.

Positions glutamate 14 to proline 111 constitute a Chorein N-terminal domain. A phosphoserine mark is found at serine 765, serine 878, serine 892, serine 894, serine 1266, serine 1301, and serine 1309. The tract at residues aspartate 1242–proline 1272 is disordered. The disordered stretch occupies residues leucine 1315–serine 1359. Acidic residues predominate over residues glutamate 1343–serine 1359. The segment at aspartate 1358–aspartate 1404 is WIPI-interacting. A Phosphoserine modification is found at serine 1402. Disordered regions lie at residues proline 1438 to arginine 1476 and glycine 1614 to proline 1657. Low complexity predominate over residues threonine 1446–proline 1464.

The protein belongs to the ATG2 family. In terms of assembly, interacts with ATG9A (via C-terminus). Interacts (via WIPI-interacting region) with WDR45B/WIPI3. Interacts (via WIPI-interacting region) with WDR45/WIPI4. Interacts with TMEM41B. Interacts with VMP1.

The protein resides in the preautophagosomal structure membrane. It is found in the lipid droplet. Its subcellular location is the endoplasmic reticulum membrane. The catalysed reaction is a 1,2-diacyl-sn-glycero-3-phospho-L-serine(in) = a 1,2-diacyl-sn-glycero-3-phospho-L-serine(out). It carries out the reaction a 1,2-diacyl-sn-glycero-3-phosphoethanolamine(in) = a 1,2-diacyl-sn-glycero-3-phosphoethanolamine(out). Functionally, lipid transfer protein involved in autophagosome assembly. Tethers the edge of the isolation membrane (IM) to the endoplasmic reticulum (ER) and mediates direct lipid transfer from ER to IM for IM expansion. Binds to the ER exit site (ERES), which is the membrane source for autophagosome formation, and extracts phospholipids from the membrane source and transfers them to ATG9 (ATG9A or ATG9B) to the IM for membrane expansion. Lipid transfer activity is enhanced by WIPI1 and WDR45/WIPI4, which promote ATG2A-association with phosphatidylinositol 3-monophosphate (PI3P)-containing membranes. Also regulates lipid droplets morphology and distribution within the cell. This chain is Autophagy-related protein 2 homolog A, found in Homo sapiens (Human).